The following is a 111-amino-acid chain: Protein RnfH (111 aa).

The tract at residues 88–111 (RRRRVQKTRESGTREGQKWLRGGA) is disordered. A compositionally biased stretch (basic and acidic residues) spans 94 to 105 (KTRESGTREGQK).

The protein belongs to the UPF0125 (RnfH) family.

This is Protein RnfH from Cupriavidus pinatubonensis (strain JMP 134 / LMG 1197) (Cupriavidus necator (strain JMP 134)).